Consider the following 231-residue polypeptide: Putative Nudix hydrolase FPV054 (231 aa).

In terms of domain architecture, Nudix hydrolase spans 74–217 (SKRRSFSEIL…SNEKYEYLHF (144 aa)). The Nudix box motif lies at 125-146 (GRVKNKESIYQCLSRELSEESD). Glu131 contacts Mg(2+). Glu140 (nucleophile) is an active-site residue. Residues Glu144 and Asp165 each coordinate Mg(2+).

This sequence belongs to the Nudix hydrolase family. The cofactor is Mg(2+). Mn(2+) serves as cofactor.

Decapping enzyme required for the removal of the 5'-end m7GpppN cap tethered to viral and host mRNAs to allow their decay in cells. May therefore accelerate viral and cellular mRNA turnover to eliminate competing host mRNAs and allow stage-specific synthesis of viral proteins. Acceleration of the turnover of cellular transcripts may even promote the shutoff of host protein synthesis. Does not cleave unmethylated RNAs or RNAs shorter than 24 nucleotides. The protein is Putative Nudix hydrolase FPV054 of Vertebrata (FPV).